Reading from the N-terminus, the 57-residue chain is MAVQQRRVSKSRKGMRRSHDHLTVSNTVACNECGKALLPHRACRDCKTYRSIKLSIK.

The disordered stretch occupies residues 1–20 (MAVQQRRVSKSRKGMRRSHD). The segment covering 7–19 (RVSKSRKGMRRSH) has biased composition (basic residues).

It belongs to the bacterial ribosomal protein bL32 family.

This Ureaplasma urealyticum serovar 10 (strain ATCC 33699 / Western) protein is Large ribosomal subunit protein bL32.